The primary structure comprises 366 residues: Phospho-N-acetylmuramoyl-pentapeptide-transferase (366 aa).

The next 10 helical transmembrane spans lie at 3 to 23 (QIIISGSVAFLVSIFLTPILI), 55 to 75 (IAIIAGITIGYLVTNIYSYFA), 80 to 100 (FTASGLLVLGLMLGLGATGFA), 118 to 138 (AKLISQLAIALVFGLLVLRFP), 161 to 181 (IAFGGGVLGTIVFLIFIYVVV), 197 to 217 (LAAGATAFVMGAYTLIAFWQF), 238 to 258 (IAVLAAGGLGATLGFLWWNAA), 262 to 282 (IFMGDTGSLALGGLVAGISVV), 290 to 310 (VIIGALFVIEVASVAIQIAVF), and 341 to 361 (FWLIAIMAVIAGMAVFYGDWL).

The protein belongs to the glycosyltransferase 4 family. MraY subfamily. Mg(2+) is required as a cofactor.

The protein localises to the cell membrane. The catalysed reaction is UDP-N-acetyl-alpha-D-muramoyl-L-alanyl-gamma-D-glutamyl-meso-2,6-diaminopimeloyl-D-alanyl-D-alanine + di-trans,octa-cis-undecaprenyl phosphate = di-trans,octa-cis-undecaprenyl diphospho-N-acetyl-alpha-D-muramoyl-L-alanyl-D-glutamyl-meso-2,6-diaminopimeloyl-D-alanyl-D-alanine + UMP. The protein operates within cell wall biogenesis; peptidoglycan biosynthesis. Functionally, catalyzes the initial step of the lipid cycle reactions in the biosynthesis of the cell wall peptidoglycan: transfers peptidoglycan precursor phospho-MurNAc-pentapeptide from UDP-MurNAc-pentapeptide onto the lipid carrier undecaprenyl phosphate, yielding undecaprenyl-pyrophosphoryl-MurNAc-pentapeptide, known as lipid I. This Corynebacterium efficiens (strain DSM 44549 / YS-314 / AJ 12310 / JCM 11189 / NBRC 100395) protein is Phospho-N-acetylmuramoyl-pentapeptide-transferase.